The chain runs to 61 residues: UPF0434 protein Pput_3813 (61 aa).

The protein belongs to the UPF0434 family.

The sequence is that of UPF0434 protein Pput_3813 from Pseudomonas putida (strain ATCC 700007 / DSM 6899 / JCM 31910 / BCRC 17059 / LMG 24140 / F1).